A 491-amino-acid polypeptide reads, in one-letter code: Proline--tRNA ligase (491 aa).

This sequence belongs to the class-II aminoacyl-tRNA synthetase family. ProS type 3 subfamily. Homodimer.

It localises to the cytoplasm. It catalyses the reaction tRNA(Pro) + L-proline + ATP = L-prolyl-tRNA(Pro) + AMP + diphosphate. In terms of biological role, catalyzes the attachment of proline to tRNA(Pro) in a two-step reaction: proline is first activated by ATP to form Pro-AMP and then transferred to the acceptor end of tRNA(Pro). This is Proline--tRNA ligase from Halorubrum lacusprofundi (strain ATCC 49239 / DSM 5036 / JCM 8891 / ACAM 34).